The sequence spans 224 residues: Deoxyribose-phosphate aldolase (224 aa).

Aspartate 92 serves as the catalytic Proton donor/acceptor. Lysine 155 (schiff-base intermediate with acetaldehyde) is an active-site residue. Lysine 184 serves as the catalytic Proton donor/acceptor.

It belongs to the DeoC/FbaB aldolase family. DeoC type 1 subfamily.

The protein localises to the cytoplasm. It catalyses the reaction 2-deoxy-D-ribose 5-phosphate = D-glyceraldehyde 3-phosphate + acetaldehyde. It functions in the pathway carbohydrate degradation; 2-deoxy-D-ribose 1-phosphate degradation; D-glyceraldehyde 3-phosphate and acetaldehyde from 2-deoxy-alpha-D-ribose 1-phosphate: step 2/2. In terms of biological role, catalyzes a reversible aldol reaction between acetaldehyde and D-glyceraldehyde 3-phosphate to generate 2-deoxy-D-ribose 5-phosphate. This chain is Deoxyribose-phosphate aldolase, found in Clostridium perfringens (strain ATCC 13124 / DSM 756 / JCM 1290 / NCIMB 6125 / NCTC 8237 / Type A).